Reading from the N-terminus, the 382-residue chain is MKKLFTSESVGRGHPDKICDQISDAILDAYLTWDPHSKVAVETMVSGNNVFIAGEVKSKVTVDVIEIAKNVLRNIGYYSNNTSFITDIKSQSENIAMGVNLQDSDDLGAGDQGFMFGYATNETSQYMPLGITLCNKIVSRAGMLIKNQEFKDAKEDMKTQVTLDYSDPQNVKVDTIIFSCHHNEKYNETKFKNYIKTQILKPVLDEFNLELPERILINPTGKFVIGGPFSDTGLTGRKIIVDTYGGSARHGGGAFSGKDATKLDRSGAYMARWIAKNLVAANIADKIEVQIAYSIGVAKPVSVMVNTFGENKVPEDVVLDAILNNFELTPKGIIKSLNLNKPIYQKSSVYGHFGREDFQFTWESLDKVEAIREFVISKGFNI.

An ATP-binding site is contributed by H14. Residue D16 participates in Mg(2+) binding. K(+) is bound at residue E42. Residues E55 and Q91 each coordinate L-methionine. Positions 91–101 are flexible loop; sequence QSENIAMGVNL. ATP contacts are provided by residues 156–158, 222–223, D231, 237–238, A254, and K258; these read DMK, KF, and RK. Position 231 (D231) interacts with L-methionine. K262 is a binding site for L-methionine.

The protein belongs to the AdoMet synthase family. Homotetramer; dimer of dimers. It depends on Mg(2+) as a cofactor. Requires K(+) as cofactor.

The protein localises to the cytoplasm. The catalysed reaction is L-methionine + ATP + H2O = S-adenosyl-L-methionine + phosphate + diphosphate. It participates in amino-acid biosynthesis; S-adenosyl-L-methionine biosynthesis; S-adenosyl-L-methionine from L-methionine: step 1/1. Functionally, catalyzes the formation of S-adenosylmethionine (AdoMet) from methionine and ATP. The overall synthetic reaction is composed of two sequential steps, AdoMet formation and the subsequent tripolyphosphate hydrolysis which occurs prior to release of AdoMet from the enzyme. The sequence is that of S-adenosylmethionine synthase from Mycoplasmopsis synoviae (strain 53) (Mycoplasma synoviae).